Here is a 454-residue protein sequence, read N- to C-terminus: MINFNEVLETNKMIEQENLDVRTITLGISLLDCISSNLEELNQNIYDKITTVAKDLVTTGKKIERQFGIPVVNKRISVTPIAMIGASACKTPSDFVTIAKTLDRAANTVGVNFIGGYSALVSKGMTSSERLLIESIPEALAVTERVCSSVNVGSTKTGINMDAVKLLGQIMLDTAEYTKEKDSLGCAKLVIFCNAPDDNPFMAGAFHGVTEADAIINVGVSGPGVVKTALESVRGEDFGTLCETIKKTAFKITRVGQLVAMEASKMLNIPFGIVDLSLAPTPAVGDSVAEILQEIGLEYPGAPGTTAALALLNDSVKKGGVMASSYVGGLSGAFIPVSEDQGMIDAVRAGCLTLEKLEAMTCVCSVGLDMIAIPGDTKATTISGIIADEMAIGMINQKTTAVRLIPVIGKKVGDIAEFGGLLGYAPIMPVNNFSCDNFVNRGGRIPAPIHSFKN.

The protein belongs to the UPF0210 family. Homodimer.

The protein is UPF0210 protein Cphy_2797 of Lachnoclostridium phytofermentans (strain ATCC 700394 / DSM 18823 / ISDg) (Clostridium phytofermentans).